The following is a 437-amino-acid chain: Mannan endo-1,4-beta-mannosidase A (437 aa).

Residues 1 to 19 (MMMLSKSLLSAATAASALA) form the signal peptide. Residues 20 to 27 (AVLQPVPR) constitute a propeptide that is removed on maturation. Residues 28–376 (ASSFVTISGT…VDAINGGTTT (349 aa)) are catalytic. Residues cysteine 53 and cysteine 56 are joined by a disulfide bond. N-linked (GlcNAc...) asparagine glycans are attached at residues asparagine 157 and asparagine 184. The Proton donor/acceptor role is filled by glutamate 196. A substrate-binding site is contributed by 196-198 (EPR). Cysteine 199 and cysteine 202 are joined by a disulfide. Residues glutamate 232 and tryptophan 274 each coordinate substrate. N-linked (GlcNAc...) asparagine glycosylation is present at asparagine 277. An intrachain disulfide couples cysteine 292 to cysteine 299. Glutamate 303 acts as the Nucleophile in catalysis. An intrachain disulfide couples cysteine 311 to cysteine 361. Asparagine 355 carries an N-linked (GlcNAc...) asparagine glycan. The disordered stretch occupies residues 372-399 (GGTTTPPPVSSTTTTSSRTSSTPPPPGG). The tract at residues 377–399 (PPPVSSTTTTSSRTSSTPPPPGG) is linker. A compositionally biased stretch (low complexity) spans 381–392 (SSTTTTSSRTSS). The region spanning 400–435 (SCSPLYGQCGGSGYTGPTCCAQGTCIYSNYWYSQCL) is the CBM1 domain.

This sequence belongs to the glycosyl hydrolase 5 (cellulase A) family. Monomer.

It is found in the secreted. It carries out the reaction Random hydrolysis of (1-&gt;4)-beta-D-mannosidic linkages in mannans, galactomannans and glucomannans.. In terms of biological role, endo-1,4-mannanase that catalyzes the random hydrolysis of (1-&gt;4)-beta-D-mannosidic linkages in mannans and heteromannans. It is a crucial enzyme for depolymerization of seed galactomannans and wood galactoglucomannans. Active against locust bean gum and ivory nut mannan, releasing mainly tri- and disaccharides. Also has transglycosylation activity. Transglycosylation of two mannotrioses into a mannohexaose is the major transglycosylation route. The chain is Mannan endo-1,4-beta-mannosidase A from Hypocrea jecorina (strain ATCC 56765 / BCRC 32924 / NRRL 11460 / Rut C-30) (Trichoderma reesei).